Reading from the N-terminus, the 637-residue chain is DNA gyrase subunit B (637 aa).

The region spanning Cys-422 to Pro-536 is the Toprim domain. 3 residues coordinate Mg(2+): Glu-428, Asp-501, and Asp-503.

Belongs to the type II topoisomerase GyrB family. Heterotetramer, composed of two GyrA and two GyrB chains. In the heterotetramer, GyrA contains the active site tyrosine that forms a transient covalent intermediate with DNA, while GyrB binds cofactors and catalyzes ATP hydrolysis. The cofactor is Mg(2+). It depends on Mn(2+) as a cofactor. Ca(2+) serves as cofactor.

Its subcellular location is the cytoplasm. It catalyses the reaction ATP-dependent breakage, passage and rejoining of double-stranded DNA.. Functionally, a type II topoisomerase that negatively supercoils closed circular double-stranded (ds) DNA in an ATP-dependent manner to modulate DNA topology and maintain chromosomes in an underwound state. Negative supercoiling favors strand separation, and DNA replication, transcription, recombination and repair, all of which involve strand separation. Also able to catalyze the interconversion of other topological isomers of dsDNA rings, including catenanes and knotted rings. Type II topoisomerases break and join 2 DNA strands simultaneously in an ATP-dependent manner. The protein is DNA gyrase subunit B of Treponema pallidum (strain Nichols).